The following is a 301-amino-acid chain: Inactive C-alpha-formylglycine-generating enzyme 2 (301 aa).

The signal sequence occupies residues 1–25 (MGISLSPLLTVLSLLSGRWLELGNG). Cysteines 156 and 290 form a disulfide. N191 is a glycosylation site (N-linked (GlcNAc...) asparagine). Ca(2+) contacts are provided by N194, L195, D208, F210, D229, G232, V234, and E236. Polar residues predominate over residues 274–284 (RMGNTPDSASD). The tract at residues 274-301 (RMGNTPDSASDNLGFRCASGAGRPPGEL) is disordered. Residues 298-301 (PGEL) carry the Non-canonical ER retention motif motif.

The protein belongs to the sulfatase-modifying factor family. In terms of assembly, homodimer and heterodimer with SUMF1.

It is found in the endoplasmic reticulum lumen. Functionally, lacks formylglycine generating activity and is unable to convert newly synthesized inactive sulfatases to their active form. Inhibits the activation of sulfatases by SUMF1. The protein is Inactive C-alpha-formylglycine-generating enzyme 2 of Bos taurus (Bovine).